Consider the following 477-residue polypeptide: Putative BTB/POZ domain-containing protein R830 (477 aa).

Residues 13-83 (SDLELILVDK…FYGIETNNDP (71 aa)) enclose the BTB domain.

The protein belongs to the mimivirus BTB/WD family.

The polypeptide is Putative BTB/POZ domain-containing protein R830 (Acanthamoeba polyphaga mimivirus (APMV)).